The chain runs to 1125 residues: Transient receptor potential cation channel subfamily A member 1 (1125 aa).

At 1 to 721 (MKRGLRRILL…KWCAYGFRAH (721 aa)) the chain is on the cytoplasmic side. ANK repeat units follow at residues 63-94 (ENLCPLHHAAAEGQVELMELIINGSSCEVLNI), 98-127 (YGNTPLHCAAEKNQVESVKFLLSQGANPNL), 131-161 (NMMSPLHIAVHGMYNEVIKVLTEHKATNINL), 165-194 (NGNTALMSTCAKDNSEALQILLEKGAKLCK), 198-227 (WGDYPVHQAAFSGAKKCMELILAYGEKNGY), 239-268 (KKASPLHLAVQSGDLDMIKMCLDNGAHIDM), 272-301 (AKCMALHFAATQGATDIVKLMISSYTGSSD), 309-338 (NQETLLHRASLFDHHDLAEYLISVGADINS), and 342-371 (EGRSPLILATASASWNIVNLLLCKGAKVDI). 5 disulfides stabilise this stretch: Cys-193/Cys-666, Cys-463/Cys-666, Cys-609/Cys-622, Cys-622/Cys-666, and Cys-634/Cys-859. Pro-395 is modified (4-hydroxyproline; transient). 5 ANK repeats span residues 413–442 (DGCTPLHYACRQGVPVSVNNLLGFNVSIHS), 446–475 (DKKSPLHFAASYGRINTCQRLLQDISDTRL), 482–511 (HGMTPLHLAAKNGHDKVVQLLLKKGALFLS), 514–543 (NGWTALHHASMGGYTQTMKVILDTNLKCTD), and 548–577 (EGNTALHFAAREGHAKAVAMLLSYNADILL). The (E)-cinnamaldehyde site is built by Cys-415 and Cys-422. Cys-622 provides a ligand contact to (E)-cinnamaldehyde. Cys-634 is subject to Cysteine sulfenic acid (-SOH); transient; in hyperoxia. Residues Cys-642, Cys-666, and Lys-712 each coordinate (E)-cinnamaldehyde. A helical membrane pass occupies residues 722 to 742 (MMNLGSYCLGLIPMTLLVVKI). The Extracellular segment spans residues 743–767 (QPGMAFNSTGIINGTSSTHEERIDT). 2 N-linked (GlcNAc...) asparagine glycosylation sites follow: Asn-749 and Asn-755. The helical transmembrane segment at 768 to 788 (LNSFPIKICMILVFLSSIFGY) threads the bilayer. Topologically, residues 789–806 (CKEVIQIFQQKRNYFLDY) are cytoplasmic. Ca(2+) is bound by residues Glu-791, Gln-794, Asn-808, and Glu-811. Residues 807-827 (NNALEWVIYTTSIIFVLPLFL) form a helical membrane-spanning segment. Residues 828–832 (NIPAY) lie on the Extracellular side of the membrane. Residues 833-853 (MQWQCGAIAIFFYWMNFLLYL) form a helical membrane-spanning segment. Over 854-876 (QRFENCGIFIVMLEVIFKTLLRS) the chain is Cytoplasmic. A Cysteine sulfenic acid (-SOH); transient; in hyperoxia modification is found at Cys-859. A helical membrane pass occupies residues 877 to 897 (TGVFIFLLLAFGLSFYVLLNF). Topologically, residues 898–904 (QDAFSTP) are extracellular. An intramembrane region (pore-forming) is located at residues 905 to 925 (LLSLIQTFSMMLGDINYRDAF). Topologically, residues 926-937 (LEPLFRNELAYP) are extracellular. The chain crosses the membrane as a helical span at residues 938–959 (VLTFGQLIAFTMFVPIVLMNLL). The Cytoplasmic segment spans residues 960–1125 (IGLAVGDIAE…THCSISHPDF (166 aa)). A coiled-coil region spans residues 1044–1073 (MEILKQKYRLKDLTSLLEKQHELIKLIIQK). 1048–1054 (KQKYRLK) is an a 1,2-diacyl-sn-glycero-3-phospho-(1D-myo-inositol) binding site.

This sequence belongs to the transient receptor (TC 1.A.4) family. In terms of assembly, homotetramer. Interacts with TMEM100. Interacts with EGLN1. Interacts with the scorpion wasabi receptor toxin at the same site that electrophiles but in a non-covalent manner. TRPA1 activation by electrophiles occurs though covalent modification of specific cysteine residues in the N-terminal cytoplasmic domain. Post-translationally, hydroxylation is required for TRPA1 activity inhibition in normoxia. In hypoxia, the decrease in oxygen concentration diminishes the activity of the hydroxylase EGLN1, thus relieving TRPA1 from inhibition and ultimately leading to channel activation. In terms of processing, oxidation of Cys-634 and Cys-859 in hyperoxia may override the hydroxylase EGLN1-mediated inhibition, causing TRPA1 activation. As to expression, expressed in inner ear (at protein level). Specifically expressed in a subset of nociceptive neurons. Expressed in the same neurons that TRPV1. In contrast, it is not expressed in neurons expressing TRPM8. Expressed in the superior cervical ganglion of vagus nerve. Expressed in the inferior ganglion (nodose ganglion) of vagus nerve. Expressed in dorsal root ganglia neurons.

The protein localises to the cell membrane. It catalyses the reaction Ca(2+)(in) = Ca(2+)(out). The enzyme catalyses Mg(2+)(in) = Mg(2+)(out). It carries out the reaction Na(+)(in) = Na(+)(out). The catalysed reaction is K(+)(in) = K(+)(out). It catalyses the reaction Zn(2+)(in) = Zn(2+)(out). With respect to regulation, electrophilic ligands activate the channel by covalent modification of intracellular cysteines. Cys-622 plays a key role in covalent binding of electrophiles. Extracellular Ca(2+) both potentiates and inactivates TRPA1; a rapid potentiation follows by slow desensitization. Activated by increase in intracellular Ca(2+) concentration. Inhibited by the potent blocker of TRPV channels ruthenium red, A-967079. Activated by icilin, sulfhydryl reactive agent MTSEA, N-methyl maleimide (NMM), and PF-4840154. Also activated by hyperoxia. Activated by intracellular Zn(2+). TRPA1 activation may critically depend on the presence of small intracellular compounds such as polyphosphates. Its function is as follows. Ligand-activated Ca(2+)-permeable, nonselective cation channel. Involved in pain detection and possibly also in cold perception, oxygen concentration perception, cough, itch, and inner ear function. Has a relatively high Ca(2+) selectivity, with a preference for divalent over monovalent cations (Ca(2+) &gt; Ba(2+) &gt; Mg(2+) &gt; NH4(+) &gt; Li(+) &gt; K(+)), the influx of cation into the cytoplasm, leads to membrane depolarization. Has a central role in the pain response to endogenous inflammatory mediators, such as bradykinin and to a diverse array of irritants. Activated by a large variety of structurally unrelated electrophilic and non-electrophilic chemical compounds, such as allylthiocyanate (AITC) from mustard oil or wasabi, cinnamaldehyde, diallyl disulfide (DADS) from garlic, and acrolein, an environmental irritant. Electrophilic ligands activate TRPA1 by interacting with critical N-terminal Cys residues in a covalent manner. Non-electrophile agonists bind at distinct sites in the transmembrane domain to promote channel activation. Also acts as an ionotropic cannabinoid receptor by being activated by delta(9)-tetrahydrocannabinol (THC), the psychoactive component of marijuana. May be a component for the mechanosensitive transduction channel of hair cells in inner ear, thereby participating in the perception of sounds. The sequence is that of Transient receptor potential cation channel subfamily A member 1 from Mus musculus (Mouse).